Reading from the N-terminus, the 323-residue chain is uncharacterized protein (323 aa).

This is an uncharacterized protein from Bacillus subtilis (strain 168).